The following is a 148-amino-acid chain: SsrA-binding protein (148 aa).

Residues K123–T148 form a disordered region. Positions D126–R142 are enriched in basic and acidic residues.

Belongs to the SmpB family.

It is found in the cytoplasm. Its function is as follows. Required for rescue of stalled ribosomes mediated by trans-translation. Binds to transfer-messenger RNA (tmRNA), required for stable association of tmRNA with ribosomes. tmRNA and SmpB together mimic tRNA shape, replacing the anticodon stem-loop with SmpB. tmRNA is encoded by the ssrA gene; the 2 termini fold to resemble tRNA(Ala) and it encodes a 'tag peptide', a short internal open reading frame. During trans-translation Ala-aminoacylated tmRNA acts like a tRNA, entering the A-site of stalled ribosomes, displacing the stalled mRNA. The ribosome then switches to translate the ORF on the tmRNA; the nascent peptide is terminated with the 'tag peptide' encoded by the tmRNA and targeted for degradation. The ribosome is freed to recommence translation, which seems to be the essential function of trans-translation. The sequence is that of SsrA-binding protein from Burkholderia pseudomallei (strain 1710b).